A 288-amino-acid polypeptide reads, in one-letter code: Polyamine aminopropyltransferase (288 aa).

Residues 9–238 (ETLHDQFGQY…GIMTFAWATD (230 aa)) enclose the PABS domain. Gln-33 serves as a coordination point for S-methyl-5'-thioadenosine. The spermidine site is built by His-64 and Asp-88. S-methyl-5'-thioadenosine-binding positions include Glu-108 and 140–141 (DG). The active-site Proton acceptor is the Asp-158. 158-161 (DCTD) contacts spermidine. Pro-165 provides a ligand contact to S-methyl-5'-thioadenosine.

This sequence belongs to the spermidine/spermine synthase family. Homodimer or homotetramer.

The protein localises to the cytoplasm. It catalyses the reaction S-adenosyl 3-(methylsulfanyl)propylamine + putrescine = S-methyl-5'-thioadenosine + spermidine + H(+). It functions in the pathway amine and polyamine biosynthesis; spermidine biosynthesis; spermidine from putrescine: step 1/1. Catalyzes the irreversible transfer of a propylamine group from the amino donor S-adenosylmethioninamine (decarboxy-AdoMet) to putrescine (1,4-diaminobutane) to yield spermidine. This Escherichia coli O81 (strain ED1a) protein is Polyamine aminopropyltransferase.